Reading from the N-terminus, the 293-residue chain is Methylsterol monooxygenase 1 (293 aa).

2 consecutive transmembrane segments (helical) span residues 55 to 75 (LIVH…FQFI) and 100 to 120 (KILF…YYFT). A Fatty acid hydroxylase domain is found at 144–274 (GCAVIEDTWH…FTWWDKLFGT (131 aa)). The short motif at 157 to 161 (HRLLH) is the Histidine box-1 element. The Histidine box-2 motif lies at 170-174 (HKVHH). A helical membrane pass occupies residues 199–219 (FFIGIVLLCDHVILLWAWVTI). The short motif at 249-255 (HHDFHHM) is the Histidine box-3 element.

Belongs to the sterol desaturase family. It depends on Fe cation as a cofactor. In terms of processing, ubiquitinated by MARCHF6, leading to proteasomal degradation.

It is found in the endoplasmic reticulum membrane. The catalysed reaction is 4,4-dimethyl-5alpha-cholest-7-en-3beta-ol + 6 Fe(II)-[cytochrome b5] + 3 O2 + 5 H(+) = 4alpha-carboxy-4beta-methyl-5alpha-cholest-7-ene-3beta-ol + 6 Fe(III)-[cytochrome b5] + 4 H2O. The enzyme catalyses 4,4-dimethyl-5alpha-cholesta-8,24-dien-3beta-ol + 6 Fe(II)-[cytochrome b5] + 3 O2 + 5 H(+) = 4beta-methylzymosterol-4alpha-carboxylate + 6 Fe(III)-[cytochrome b5] + 4 H2O. It catalyses the reaction 4alpha-methylzymosterol + 6 Fe(II)-[cytochrome b5] + 3 O2 + 5 H(+) = 4alpha-carboxyzymosterol + 6 Fe(III)-[cytochrome b5] + 4 H2O. It carries out the reaction 4alpha-methyl-5alpha-cholest-7-en-3beta-ol + 6 Fe(II)-[cytochrome b5] + 3 O2 + 5 H(+) = 4alpha-carboxy-5alpha-cholest-7-en-3beta-ol + 6 Fe(III)-[cytochrome b5] + 4 H2O. The catalysed reaction is 4,4-dimethyl-5alpha-cholest-8-en-3beta-ol + 6 Fe(II)-[cytochrome b5] + 3 O2 + 5 H(+) = 4alpha-carboxy-4beta-methyl-5alpha-cholest-8-en-3beta-ol + 6 Fe(III)-[cytochrome b5] + 4 H2O. The enzyme catalyses 4alpha-methyl-5alpha-cholest-8-en-3beta-ol + 6 Fe(II)-[cytochrome b5] + 3 O2 + 5 H(+) = 4alpha-carboxy-5alpha-cholest-8-ene-3beta-ol + 6 Fe(III)-[cytochrome b5] + 4 H2O. Its pathway is steroid biosynthesis; zymosterol biosynthesis; zymosterol from lanosterol: step 3/6. It functions in the pathway steroid biosynthesis; cholesterol biosynthesis. In terms of biological role, catalyzes the three-step monooxygenation required for the demethylation of 4,4-dimethyl and 4alpha-methylsterols, which can be subsequently metabolized to cholesterol. In Mus musculus (Mouse), this protein is Methylsterol monooxygenase 1 (Msmo1).